We begin with the raw amino-acid sequence, 165 residues long: Protein NKG7 (165 aa).

4 helical membrane passes run 9-29 (LLGG…DFWF), 61-81 (FSIM…LSCF), 92-112 (LVST…MAVY), and 133-153 (FYLG…SLGA).

The protein belongs to the PMP-22/EMP/MP20 family. As to expression, expressed in activated T-cells, in kidney, liver, lung and pancreas. Not expressed in brain, heart, or skeletal muscle. Expressed at high levels in TCR gamma delta-expressing CTL clones, and in some TCR alpha beta-expressing CTL clones (both CD4+ and CD8+), but is not expressed in other TCR alpha beta-expressing CTL clones and in cell lines representing B-cells, monocytes, and myeloid cells.

The protein resides in the cell membrane. It localises to the cytolytic granule membrane. Regulates cytotoxic granule exocytosis in effector lymphocytes, thus acting as a critical mediator of inflammation in a broad range of infectious and non-infectious diseases. Essential for cytotoxic degranulation of natural killer (NK) cells and CD8(+) T-cells and for the activation of CD4(+) T-cells following infection. Plays a critical role in CD8(+) T-cell and NK cell-mediated cytolysis of target cells and contributes to the cytolytic activity via the perforin/granzyme pathway by enhancing exocytosis of LAMP1-carrying lytic granules. Contributes to NK cell-mediated control of cancer metastasis. In Homo sapiens (Human), this protein is Protein NKG7 (NKG7).